The chain runs to 267 residues: Hydrolase FUB4 (267 aa).

Residues Ser93, Asp183, and His243 each act as charge relay system in the active site.

The protein belongs to the AB hydrolase 3 family.

It participates in mycotoxin biosynthesis. Hydrolase; part of the gene cluster that mediates the biosynthesis of fusaric acid, a mycotoxin with low to moderate toxicity to animals and humans, but with high phytotoxic properties. L-aspartate is suggested as fusaric acid amino acid precursor that is activated and further processed to O-acetyl-L-homoserine by cluster enzymes aspartate kinase FUB3 and homoserine O-acetyltransferase FUB5, as well as enzymes of the primary metabolism. The polyketide synthase (PKS) FUB1 generates the triketide trans-2-hexenal which is presumptively released by the hydrolase FUB4 and linked to the NRPS-bound amino acid precursor by NAD(P)-dependent dehydrogenase FUB6. FUB1, FUB4, and the non-canonical NRPS Fub8 may form an enzyme complex. Further processing of the NRPS-bound intermediate might be carried out by FUB6 and the sulfhydrylase FUB7, enabling a spontaneous electrocyclization to close the carbon backbone of fusaric acid. Dihydrofusaric acid is likely to be released via reduction by the thioester reductase (TR) domain of FUB8 whereupon the final oxidation to fusaric acid may (also) be performed by the FMN-dependent dehydrogenase FUB9. The sequence is that of Hydrolase FUB4 from Fusarium oxysporum f. sp. lycopersici (strain 4287 / CBS 123668 / FGSC 9935 / NRRL 34936) (Fusarium vascular wilt of tomato).